We begin with the raw amino-acid sequence, 47 residues long: Defensin-like protein 2 (47 aa).

Cystine bridges form between Cys-5-Cys-47, Cys-16-Cys-36, Cys-22-Cys-43, and Cys-26-Cys-45.

Belongs to the DEFL family.

In terms of biological role, fabatins have antibacterial activity against Gram-positive and Gram-negative bacteria. High activity against P.aeruginosa. No activity against S.cerevisiae and C.albicans. The polypeptide is Defensin-like protein 2 (Vicia faba (Broad bean)).